The sequence spans 210 residues: MNILLPSTLFVLLMFQIIGSGMGCDMKVRGLDANMKKMILDLHNKKRQIVANGQQSGQPSAANMKELHWNDEIAANAQRSAETCVFEHTAKSLRKTTKYSYLGENIYKGSYPDPIPRSVNAWYDEVKDVTPAVVKSFSSGGPMIGHYTQMVWANTEALDCGLVTASDRNSYLFCQYGPGGNYRSQPIYKQGPPASDCKNGKSSKYPGLCN.

The signal sequence occupies residues 1 to 23; that stretch reads MNILLPSTLFVLLMFQIIGSGMG.

Contains 3 disulfide bonds. In terms of tissue distribution, expressed by the venom gland.

It localises to the secreted. The polypeptide is Scoloptoxin SSD558 (Scolopendra dehaani (Thai centipede)).